Reading from the N-terminus, the 246-residue chain is Small ribosomal subunit protein uS3 (246 aa).

A KH type-2 domain is found at 23–94; it reads LNEFLTRELA…RIELYAEKVA (72 aa). A disordered region spans residues 201-246; that stretch reads GPKKPLPDNVSVVEPKEEKIYETPETEYKIPPPSKPLDDLSEAKVL. Basic and acidic residues-rich tracts occupy residues 214-228 and 236-246; these read EPKEEKIYETPETEY and PLDDLSEAKVL. Thr223 and Thr226 each carry phosphothreonine. Residue Ser241 is modified to Phosphoserine.

It belongs to the universal ribosomal protein uS3 family. Interacts with LTV1; the interaction is RNA-independent.

It is found in the cytoplasm. It localises to the nucleus. Functionally, has DNA repair activity directed towards the mutagenic lesions 8-oxoguanine and abasic sites in DNA. It can cleave DNA containing 8-oxoguanine residues efficiently. Also acts as an ap lyase, cleaving phosphodiester bonds via a beta,delta elimination reaction. This is Small ribosomal subunit protein uS3 (RpS3) from Drosophila melanogaster (Fruit fly).